Reading from the N-terminus, the 419-residue chain is Dynein regulatory complex protein 9 (419 aa).

2 disordered regions span residues 1-47 and 393-419; these read MEGE…SPEV and SFKMPKKEKDDSKDAKGKEKDKRRGKK. Acidic residues predominate over residues 34–44; the sequence is EELEEEEEETS. An IQ domain is found at 371 to 400; the sequence is ELRSIVKLQAWWRGTVVRREIGSFKMPKKE.

It belongs to the DRC9 family. As to quaternary structure, component of the nexin-dynein regulatory complex (N-DRC). Interacts (via IQ domain) with CALM when calcium levels are low. Does not interact with CALM in the presence of Ca(2+). Interacts with the HSP70 proteins HSPA1L and HSPA8. May form a complex with CAMK4 and HSP70.

The protein localises to the cytoplasm. It localises to the cell projection. The protein resides in the cilium. It is found in the flagellum. Its subcellular location is the cytoskeleton. The protein localises to the flagellum axoneme. Functionally, component of the nexin-dynein regulatory complex (N-DRC), a key regulator of ciliary/flagellar motility which maintains the alignment and integrity of the distal axoneme and regulates microtubule sliding in motile axonemes. Binds calmodulin when cellular Ca(2+) levels are low and thereby contributes to the regulation of calcium and calmodulin-dependent protein kinase IV (CAMK4) activity; contributes to the regulation of CAMK4 signaling cascades. Required for normal axoneme assembly in sperm flagella, normal sperm tail formation and for male fertility. The polypeptide is Dynein regulatory complex protein 9 (Iqcg) (Rattus norvegicus (Rat)).